A 193-amino-acid polypeptide reads, in one-letter code: dCTP deaminase (193 aa).

DCTP is bound by residues 110 to 115, Asp-128, 136 to 138, Tyr-171, Lys-178, and Gln-182; these read RSSLAR and VLE. The active-site Proton donor/acceptor is the Glu-138. The segment at 169 to 193 is disordered; sequence RPYNRREDAKYRNQQGAVASRIDKD.

The protein belongs to the dCTP deaminase family. In terms of assembly, homotrimer.

The enzyme catalyses dCTP + H2O + H(+) = dUTP + NH4(+). It functions in the pathway pyrimidine metabolism; dUMP biosynthesis; dUMP from dCTP (dUTP route): step 1/2. Its function is as follows. Catalyzes the deamination of dCTP to dUTP. The sequence is that of dCTP deaminase from Escherichia coli O1:K1 / APEC.